The following is a 346-amino-acid chain: Small ribosomal subunit biogenesis GTPase RsgA (346 aa).

A CP-type G domain is found at 98 to 261 (VQGGRGPQLA…VIDTPGMRTL (164 aa)). GTP-binding positions include 148–151 (TKAD) and 200–208 (GSSGVGKST). Positions 284, 289, 291, and 297 each coordinate Zn(2+). Residues 317-346 (RKLSDENQHNTPVQSGPRGAKSPAGRGKRR) form a disordered region.

The protein belongs to the TRAFAC class YlqF/YawG GTPase family. RsgA subfamily. As to quaternary structure, monomer. Associates with 30S ribosomal subunit, binds 16S rRNA. Requires Zn(2+) as cofactor.

It is found in the cytoplasm. Functionally, one of several proteins that assist in the late maturation steps of the functional core of the 30S ribosomal subunit. Helps release RbfA from mature subunits. May play a role in the assembly of ribosomal proteins into the subunit. Circularly permuted GTPase that catalyzes slow GTP hydrolysis, GTPase activity is stimulated by the 30S ribosomal subunit. The chain is Small ribosomal subunit biogenesis GTPase RsgA from Mesorhizobium japonicum (strain LMG 29417 / CECT 9101 / MAFF 303099) (Mesorhizobium loti (strain MAFF 303099)).